The primary structure comprises 249 residues: Zinc import ATP-binding protein ZnuC (249 aa).

Residues 1 to 219 (MRLVSLRNAT…PEYQALFGSG (219 aa)) enclose the ABC transporter domain. Residue 36 to 43 (GPNGSGKS) participates in ATP binding.

This sequence belongs to the ABC transporter superfamily. Zinc importer (TC 3.A.1.15.5) family. As to quaternary structure, the complex is composed of two ATP-binding proteins (ZnuC), two transmembrane proteins (ZnuB) and a solute-binding protein (ZnuA).

The protein localises to the cell inner membrane. It catalyses the reaction Zn(2+)(out) + ATP(in) + H2O(in) = Zn(2+)(in) + ADP(in) + phosphate(in) + H(+)(in). In terms of biological role, part of the ABC transporter complex ZnuABC involved in zinc import. Responsible for energy coupling to the transport system. This Ruegeria sp. (strain TM1040) (Silicibacter sp.) protein is Zinc import ATP-binding protein ZnuC.